The primary structure comprises 460 residues: Argininosuccinate lyase (460 aa).

It belongs to the lyase 1 family. Argininosuccinate lyase subfamily.

It is found in the cytoplasm. It catalyses the reaction 2-(N(omega)-L-arginino)succinate = fumarate + L-arginine. It participates in amino-acid biosynthesis; L-arginine biosynthesis; L-arginine from L-ornithine and carbamoyl phosphate: step 3/3. The chain is Argininosuccinate lyase from Pelotomaculum thermopropionicum (strain DSM 13744 / JCM 10971 / SI).